The following is a 190-amino-acid chain: Large ribosomal subunit protein bL25 (190 aa).

It belongs to the bacterial ribosomal protein bL25 family. CTC subfamily. Part of the 50S ribosomal subunit; part of the 5S rRNA/L5/L18/L25 subcomplex. Contacts the 5S rRNA. Binds to the 5S rRNA independently of L5 and L18.

Functionally, this is one of the proteins that binds to the 5S RNA in the ribosome where it forms part of the central protuberance. The protein is Large ribosomal subunit protein bL25 of Neisseria gonorrhoeae (strain ATCC 700825 / FA 1090).